Reading from the N-terminus, the 147-residue chain is Basic phospholipase A2 beta-bungarotoxin A4 chain (147 aa).

A signal peptide spans 1-19 (MNPAHLLVLSAVCVSLLGA). The propeptide occupies 20–27 (ANIPPHPL). Disulfide bonds link cysteine 54–cysteine 146, cysteine 56–cysteine 72, cysteine 71–cysteine 127, cysteine 78–cysteine 120, cysteine 88–cysteine 113, and cysteine 106–cysteine 118. The Ca(2+) site is built by tyrosine 55, glycine 57, and glycine 59. Histidine 75 is a catalytic residue. Aspartate 76 is a binding site for Ca(2+). Residue aspartate 121 is part of the active site.

It belongs to the phospholipase A2 family. Group I subfamily. D49 sub-subfamily. As to quaternary structure, heterodimer; disulfide-linked. The A chain has phospholipase A2 activity and the B chain shows homology with the basic protease inhibitors. Ca(2+) serves as cofactor. As to expression, expressed by the venom gland.

The protein resides in the secreted. The catalysed reaction is a 1,2-diacyl-sn-glycero-3-phosphocholine + H2O = a 1-acyl-sn-glycero-3-phosphocholine + a fatty acid + H(+). Functionally, snake venom phospholipase A2 (PLA2) that shows presynaptic neurotoxicity. The A chain has phospholipase activity. PLA2 catalyzes the calcium-dependent hydrolysis of the 2-acyl groups in 3-sn-phosphoglycerides. The polypeptide is Basic phospholipase A2 beta-bungarotoxin A4 chain (Bungarus candidus (Malayan krait)).